A 1142-amino-acid chain; its full sequence is Potassium channel subfamily T member 2 (1142 aa).

Residues 1-63 lie on the Cytoplasmic side of the membrane; that stretch reads MVDLESEVPP…KNQRSSLRIR (63 aa). The chain crosses the membrane as a helical span at residues 64 to 84; that stretch reads LFNFSLKLLSCLLYIIRVLLE. Topologically, residues 85-101 are extracellular; that stretch reads KPSQGNDWSHIFWVNRS. N99 carries N-linked (GlcNAc...) asparagine glycosylation. A helical transmembrane segment spans residues 102–122; sequence LPLWGLQVSVALISLFETILL. Residues 123–137 lie on the Cytoplasmic side of the membrane; the sequence is GYLSYKGNIWEQILR. Residues 138–158 traverse the membrane as a helical segment; that stretch reads VPFILEIINAVPFIISIFWPT. The Extracellular segment spans residues 159 to 160; the sequence is LR. A helical transmembrane segment spans residues 161–173; the sequence is NLFVPVFLNCWLA. Over 174–198 the chain is Cytoplasmic; it reads KHALENMINDLHRAIQRTQSAMFNQ. Residues 199-219 form a helical membrane-spanning segment; it reads VLILISTLLCLIFTCICGIQH. The Extracellular segment spans residues 220–228; it reads LERIGKKLN. Residues 229–249 constitute an intramembrane region (pore-forming); the sequence is LFDSLYFCIVTFSTVGFGDVT. Residues 250–256 are Extracellular-facing; it reads PETWSSK. Residues 257–277 traverse the membrane as a helical segment; sequence LFVVAMICVALVVLPIQFEQL. Topologically, residues 278–1142 are cytoplasmic; sequence AYLWMERQKS…VQDSREETQL (865 aa). RCK N-terminal domains are found at residues 299 to 435 and 725 to 865; these read EKHV…DHVV and NKLI…CYSL. Disordered regions lie at residues 989-1044 and 1118-1142; these read DTKD…EKIT and PNSE…ETQL. The span at 1017 to 1037 shows a compositional bias: basic residues; it reads LRRKSMQWARRLSRKGPKHSG. Residues 1118–1129 show a composition bias toward polar residues; it reads PNSEPSRKNSIC.

It belongs to the potassium channel family. Calcium-activated (TC 1.A.1.3) subfamily. KCa4.2/KCNT2 sub-subfamily. Homotetramer. Forms heteromer with KCNT1; heteromeric channels differ from those of homomeric channels in their unitary conductance, kinetic behavior, subcellular localization, and response to activation of protein kinase C. In terms of processing, phosphorylated by protein kinase C. Phosphorylation of the C-terminal domain inhibits channel activity. Detected in brain, and at low levels in heart. Detected in brainstem, including auditory neurons such as the medial nucleus of the trapezoid body. Detected in the olfactory bulb, red nucleus, facial nucleus, pontine nucleus, oculomotor nucleus, substantia nigra, deep cerebellar nuclei, vestibular nucleus, and the thalamus. Detected in hippocampal CA1, CA2, and CA3 regions, the dentate gyrus, supraoptic nucleus, hypothalamus, dorsal root ganglion, and cortical layers II, III, and V. Detected in striatum cholinergic interneurons.

It is found in the cell membrane. It catalyses the reaction K(+)(in) = K(+)(out). Its activity is regulated as follows. Are normally in a closed state unless activated by an increase in intracellular Na(+) and Cl(-). Inhibited upon stimulation of G-protein coupled receptors, such as CHRM1 and GRM1. There is conflicting data about the effect of ATP on KNCT2 channels activity. Intracellular ATP was initially report to inhibit the channel activity. However, others studies conclude that KNCT2 channels are not inhibited by intracellular ATP. Its function is as follows. Sodium-activated and chloride-activated potassium channel. Produces rapidly activating outward rectifier K(+) currents. Contributes to regulate neuronal excitability. This chain is Potassium channel subfamily T member 2 (Kcnt2), found in Rattus norvegicus (Rat).